An 83-amino-acid chain; its full sequence is ATP synthase subunit c (83 aa).

Transmembrane regions (helical) follow at residues isoleucine 10–leucine 30 and methionine 52–phenylalanine 72.

It belongs to the ATPase C chain family. In terms of assembly, F-type ATPases have 2 components, F(1) - the catalytic core - and F(0) - the membrane proton channel. F(1) has five subunits: alpha(3), beta(3), gamma(1), delta(1), epsilon(1). F(0) has three main subunits: a(1), b(2) and c(10-14). The alpha and beta chains form an alternating ring which encloses part of the gamma chain. F(1) is attached to F(0) by a central stalk formed by the gamma and epsilon chains, while a peripheral stalk is formed by the delta and b chains.

The protein localises to the cell inner membrane. Functionally, f(1)F(0) ATP synthase produces ATP from ADP in the presence of a proton or sodium gradient. F-type ATPases consist of two structural domains, F(1) containing the extramembraneous catalytic core and F(0) containing the membrane proton channel, linked together by a central stalk and a peripheral stalk. During catalysis, ATP synthesis in the catalytic domain of F(1) is coupled via a rotary mechanism of the central stalk subunits to proton translocation. In terms of biological role, key component of the F(0) channel; it plays a direct role in translocation across the membrane. A homomeric c-ring of between 10-14 subunits forms the central stalk rotor element with the F(1) delta and epsilon subunits. The chain is ATP synthase subunit c from Shewanella loihica (strain ATCC BAA-1088 / PV-4).